Here is a 481-residue protein sequence, read N- to C-terminus: Protein NRT1/ PTR FAMILY 1.3 (481 aa).

12 helical membrane-spanning segments follow: residues 32–52 (LAYF…YGMG), 57–77 (ANIL…GAFI), 88–108 (IGFG…TTII), 124–144 (LLKS…AGGV), 173–193 (FNWY…LLVF), 202–222 (IGFG…FAAS), 259–279 (IWST…FIVL), 302–322 (IFLV…IVPL), 333–353 (LGVM…ISAL), 374–394 (AMWL…NTIA), 422–442 (ASLI…GSWI), and 451–471 (LDYY…YFVW).

The protein belongs to the major facilitator superfamily. Proton-dependent oligopeptide transporter (POT/PTR) (TC 2.A.17) family. As to expression, expressed in roots.

It is found in the membrane. The polypeptide is Protein NRT1/ PTR FAMILY 1.3 (NPF1.3) (Arabidopsis thaliana (Mouse-ear cress)).